Reading from the N-terminus, the 404-residue chain is Tryptophan synthase beta chain (404 aa).

The residue at position 94 (Lys94) is an N6-(pyridoxal phosphate)lysine.

This sequence belongs to the TrpB family. As to quaternary structure, tetramer of two alpha and two beta chains. It depends on pyridoxal 5'-phosphate as a cofactor.

The catalysed reaction is (1S,2R)-1-C-(indol-3-yl)glycerol 3-phosphate + L-serine = D-glyceraldehyde 3-phosphate + L-tryptophan + H2O. It functions in the pathway amino-acid biosynthesis; L-tryptophan biosynthesis; L-tryptophan from chorismate: step 5/5. The beta subunit is responsible for the synthesis of L-tryptophan from indole and L-serine. The protein is Tryptophan synthase beta chain of Staphylococcus aureus (strain JH1).